Consider the following 359-residue polypeptide: Transcription elongation factor A N-terminal and central domain-containing protein (359 aa).

Residues 1–82 form the TFIIS N-terminal domain; it reads MSDKNQIIAR…AKWRGFYKST (82 aa). Residues 84–118 form a disordered region; it reads CKPRQSPKVLHTNANKEESAAVSQDVSQDETSGSS. The span at 104 to 118 shows a compositional bias: polar residues; sequence AVSQDVSQDETSGSS. The TFIIS central domain maps to 182–298; it reads VRSKCVELLY…EHCLPQSVDG (117 aa).

In Mus musculus (Mouse), this protein is Transcription elongation factor A N-terminal and central domain-containing protein (Tceanc).